The following is a 195-amino-acid chain: Glycerol-3-phosphate acyltransferase (195 aa).

Helical transmembrane passes span Ile2–Val22, Ala79–Phe99, Val111–Leu131, and Thr146–Leu166.

It belongs to the PlsY family. In terms of assembly, probably interacts with PlsX.

Its subcellular location is the cell membrane. The catalysed reaction is an acyl phosphate + sn-glycerol 3-phosphate = a 1-acyl-sn-glycero-3-phosphate + phosphate. The protein operates within lipid metabolism; phospholipid metabolism. Functionally, catalyzes the transfer of an acyl group from acyl-phosphate (acyl-PO(4)) to glycerol-3-phosphate (G3P) to form lysophosphatidic acid (LPA). This enzyme utilizes acyl-phosphate as fatty acyl donor, but not acyl-CoA or acyl-ACP. The sequence is that of Glycerol-3-phosphate acyltransferase from Alkaliphilus metalliredigens (strain QYMF).